The chain runs to 913 residues: DNA polymerase I (913 aa).

The region spanning 1-305 (MSQAPLVLVD…AGENGEAETP (305 aa)) is the 5'-3' exonuclease domain. Residues 306 to 501 (IQAEVDYDVV…LHQALWQKLE (196 aa)) enclose the 3'-5' exonuclease domain. The interval 505 to 913 (SLARVLTDIE…GVGSNWDEAH (409 aa)) is polymerase.

This sequence belongs to the DNA polymerase type-A family. Single-chain monomer with multiple functions.

It catalyses the reaction DNA(n) + a 2'-deoxyribonucleoside 5'-triphosphate = DNA(n+1) + diphosphate. Functionally, in addition to polymerase activity, this DNA polymerase exhibits 3'-5' and 5'-3' exonuclease activity. The protein is DNA polymerase I (polA) of Pseudomonas aeruginosa (strain ATCC 15692 / DSM 22644 / CIP 104116 / JCM 14847 / LMG 12228 / 1C / PRS 101 / PAO1).